Reading from the N-terminus, the 497-residue chain is Di-/tripeptide transporter (497 aa).

Residues Met1–Arg36 lie on the Cytoplasmic side of the membrane. Residues Ala37 to Gly55 traverse the membrane as a helical segment. Residues Leu56–Ile64 are Extracellular-facing. The helical transmembrane segment at Val65–Ala83 threads the bilayer. Residues Asp84 to Thr92 lie on the Cytoplasmic side of the membrane. The helical transmembrane segment at Ile93–Phe111 threads the bilayer. Topologically, residues Gly112 to Ser115 are extracellular. A helical membrane pass occupies residues Leu116–Ile134. Topologically, residues Ser135 to Asn154 are cytoplasmic. A helical transmembrane segment spans residues Ile155–Thr173. At Val174 to His181 the chain is on the extracellular side. The chain crosses the membrane as a helical span at residues Leu182–Tyr200. At Gly201–Asn224 the chain is on the cytoplasmic side. Residues Phe225–Ile243 traverse the membrane as a helical segment. Residues Tyr244–Asn254 are Extracellular-facing. The helical transmembrane segment at Phe255–Met273 threads the bilayer. The Cytoplasmic portion of the chain corresponds to Met274–Pro293. The helical transmembrane segment at Leu294–Ile312 threads the bilayer. Topologically, residues Ala313–Pro335 are extracellular. The helical transmembrane segment at Ser336 to Val354 threads the bilayer. Over Arg355–Gly372 the chain is Cytoplasmic. A helical transmembrane segment spans residues Leu373–Leu391. Over Asn392–Ser425 the chain is Extracellular. Residues Thr426 to Ala444 form a helical membrane-spanning segment. Topologically, residues Asp445–Arg497 are cytoplasmic.

It belongs to the major facilitator superfamily. Proton-dependent oligopeptide transporter (POT/PTR) (TC 2.A.17) family.

It localises to the cell membrane. Proton-dependent uptake of di- or tri-peptides. The chain is Di-/tripeptide transporter (dtpT) from Lactococcus lactis subsp. cremoris (Streptococcus cremoris).